The chain runs to 774 residues: Multiple C2 domain and transmembrane region protein 11 (774 aa).

The segment covering 1–12 has biased composition (gly residues); sequence MAVNGTGNGTGD. The disordered stretch occupies residues 1–30; that stretch reads MAVNGTGNGTGDGDFSLKETSPNIGNGGVN. C2 domains follow at residues 9–145, 184–307, and 338–471; these read GTGD…PQWY, VTGE…SLWY, and LDES…THSY. Ca(2+) is bound by residues aspartate 62, asparagine 110, aspartate 112, and aspartate 118. The next 2 membrane-spanning stretches (helical) occupy residues 608 to 628 and 722 to 742; these read LFVV…CFVF and FVSC…FLAF.

It belongs to the MCTP family. The cofactor is Ca(2+). Observed in flowers.

It is found in the endoplasmic reticulum membrane. Functionally, may function as a signaling molecule by regulating the trafficking of other regulators. The sequence is that of Multiple C2 domain and transmembrane region protein 11 from Arabidopsis thaliana (Mouse-ear cress).